Reading from the N-terminus, the 294-residue chain is N-acetylmuramic acid 6-phosphate etherase (294 aa).

The 164-residue stretch at 54-217 folds into the SIS domain; sequence TIHSFKSNGR…STASMIGVGK (164 aa). Glu-82 serves as the catalytic Proton donor. The active site involves Glu-113.

This sequence belongs to the GCKR-like family. MurNAc-6-P etherase subfamily. As to quaternary structure, homodimer.

It catalyses the reaction N-acetyl-D-muramate 6-phosphate + H2O = N-acetyl-D-glucosamine 6-phosphate + (R)-lactate. It functions in the pathway amino-sugar metabolism; N-acetylmuramate degradation. Specifically catalyzes the cleavage of the D-lactyl ether substituent of MurNAc 6-phosphate, producing GlcNAc 6-phosphate and D-lactate. This Oceanobacillus iheyensis (strain DSM 14371 / CIP 107618 / JCM 11309 / KCTC 3954 / HTE831) protein is N-acetylmuramic acid 6-phosphate etherase.